We begin with the raw amino-acid sequence, 374 residues long: DNA replication and repair protein RecF (374 aa).

30–37 (GPNAQGKS) is a binding site for ATP.

The protein belongs to the RecF family.

It localises to the cytoplasm. Its function is as follows. The RecF protein is involved in DNA metabolism; it is required for DNA replication and normal SOS inducibility. RecF binds preferentially to single-stranded, linear DNA. It also seems to bind ATP. In Acaryochloris marina (strain MBIC 11017), this protein is DNA replication and repair protein RecF.